A 220-amino-acid polypeptide reads, in one-letter code: Chaperone protein TorD (220 aa).

It belongs to the TorD/DmsD family. TorD subfamily.

The protein localises to the cytoplasm. Its function is as follows. Involved in the biogenesis of TorA. Acts on TorA before the insertion of the molybdenum cofactor and, as a result, probably favors a conformation of the apoenzyme that is competent for acquiring the cofactor. The chain is Chaperone protein TorD from Vibrio cholerae serotype O1 (strain ATCC 39315 / El Tor Inaba N16961).